Reading from the N-terminus, the 63-residue chain is Lantibiotic mutacin-1140 (63 aa).

The propeptide occupies 1-41 (MSNTQLLEVLGTETFDVQEDLFAFDTTDTTIVASNDDPDTR). Residues 44–48 (SWSLC) constitute a cross-link (lanthionine (Ser-Cys)). S46 bears the 2,3-didehydroalanine (Ser) mark. A cross-link (beta-methyllanthionine (Thr-Cys)) is located at residues 49 to 52 (TPGC). Residue T55 is modified to 2,3-didehydrobutyrine. A cross-link (lanthionine (Ser-Cys)) is located at residues 57-62 (SFNSYC). Residues 60–63 (SYCC) constitute a cross-link (S-(2-aminovinyl)-D-cysteine (Ser-Cys)).

The protein belongs to the type A lantibiotic family. In terms of processing, maturation of lantibiotics involves the enzymatic conversion of Thr, and Ser into dehydrated AA and the formation of thioether bonds with cysteine. The C-terminal lanthionine undergoes decarboxylation. This is followed by membrane translocation and cleavage of the modified precursor. Post-translationally, the structure of the 2,3-didehydrobutyrine is not discussed in PubMed:11082191.

Lanthionine-containing peptide antibiotic (lantibiotic) active on Gram-positive bacteria. The bactericidal activity of lantibiotics is based on depolarization of energized bacterial cytoplasmic membranes, initiated by the formation of aqueous transmembrane pores. The protein is Lantibiotic mutacin-1140 (lanA) of Streptococcus mutans.